Consider the following 347-residue polypeptide: Holliday junction branch migration complex subunit RuvB (347 aa).

The tract at residues 13-195 (NEDAVTSGEV…FGIVEHMQYY (183 aa)) is large ATPase domain (RuvB-L). ATP contacts are provided by residues Leu34, Arg35, Gly76, Lys79, Thr80, Thr81, 142–144 (EDY), Arg185, Tyr195, and Arg232. Thr80 contacts Mg(2+). A small ATPAse domain (RuvB-S) region spans residues 196–266 (TIDELEKIVQ…TTEGALKQLQ (71 aa)). The interval 269-347 (DEGLDQTDRR…QLGLPVPGDK (79 aa)) is head domain (RuvB-H). Arg329 provides a ligand contact to DNA.

Belongs to the RuvB family. As to quaternary structure, homohexamer. Forms an RuvA(8)-RuvB(12)-Holliday junction (HJ) complex. HJ DNA is sandwiched between 2 RuvA tetramers; dsDNA enters through RuvA and exits via RuvB. An RuvB hexamer assembles on each DNA strand where it exits the tetramer. Each RuvB hexamer is contacted by two RuvA subunits (via domain III) on 2 adjacent RuvB subunits; this complex drives branch migration. In the full resolvosome a probable DNA-RuvA(4)-RuvB(12)-RuvC(2) complex forms which resolves the HJ.

The protein localises to the cytoplasm. The enzyme catalyses ATP + H2O = ADP + phosphate + H(+). Functionally, the RuvA-RuvB-RuvC complex processes Holliday junction (HJ) DNA during genetic recombination and DNA repair, while the RuvA-RuvB complex plays an important role in the rescue of blocked DNA replication forks via replication fork reversal (RFR). RuvA specifically binds to HJ cruciform DNA, conferring on it an open structure. The RuvB hexamer acts as an ATP-dependent pump, pulling dsDNA into and through the RuvAB complex. RuvB forms 2 homohexamers on either side of HJ DNA bound by 1 or 2 RuvA tetramers; 4 subunits per hexamer contact DNA at a time. Coordinated motions by a converter formed by DNA-disengaged RuvB subunits stimulates ATP hydrolysis and nucleotide exchange. Immobilization of the converter enables RuvB to convert the ATP-contained energy into a lever motion, pulling 2 nucleotides of DNA out of the RuvA tetramer per ATP hydrolyzed, thus driving DNA branch migration. The RuvB motors rotate together with the DNA substrate, which together with the progressing nucleotide cycle form the mechanistic basis for DNA recombination by continuous HJ branch migration. Branch migration allows RuvC to scan DNA until it finds its consensus sequence, where it cleaves and resolves cruciform DNA. The protein is Holliday junction branch migration complex subunit RuvB of Lactobacillus helveticus (strain DPC 4571).